The chain runs to 333 residues: MPIRHCIVHLIDKKPDGTPAVLHARDSELAESAAIENLLADLNDSYNAKQGKAWGFFHAESGAYPFSGWLKEYFDGSQDFTSFSRVAIKHLQTLMEASNLSTGGHVLFAHYQQGMTEYLAIALLHHSEGVAVNAELDVTPSRHLDLGQLHLAARINLSEWKNNQNSKQYISFIKGKNGKKVSEYFRDFIGCQEGVDGPGETRTLLKAFSDYVEKEDLPEESAREKTQTLVDYATAQTKLGEPVTLEELSSLIDEDRPKAFYDHIRNSDYGLSPEIPADKRTLNQFRRFTGRAEGLSISFEAHLLGEKIEYDEAAGTLIIKGLPTQLIDQLKRR.

It belongs to the YejK family.

It localises to the cytoplasm. The protein resides in the nucleoid. The polypeptide is Nucleoid-associated protein PSPPH_1145 (Pseudomonas savastanoi pv. phaseolicola (strain 1448A / Race 6) (Pseudomonas syringae pv. phaseolicola (strain 1448A / Race 6))).